The sequence spans 269 residues: Fructose permease IIC component (269 aa).

One can recognise a PTS EIIC type-4 domain in the interval 1–234 (MSSLQIILLL…GALGLCLALL (234 aa)). Helical transmembrane passes span 2–22 (SSLQIILLLIIAAITGIASVL), 35–54 (TLVGLVLGDLKTGIILGGTL), 64–86 (VGLAMAPDTAIASVISTILVITA), 90–110 (IGEGIAVAVALAAAGQALTIF), 149–169 (VMIPTLIVALISVSAVQAFLG), 181–201 (IGGGIIVVVGYAMVINMMNIP), and 206–226 (FFYIGFLLAAFTDFNLVGFGA).

The protein resides in the cell membrane. Its function is as follows. The phosphoenolpyruvate-dependent sugar phosphotransferase system (PTS), a major carbohydrate active -transport system, catalyzes the phosphorylation of incoming sugar substrates concomitant with their translocation across the cell membrane. This system is involved in fructose transport. This is Fructose permease IIC component (levF) from Bacillus subtilis (strain 168).